We begin with the raw amino-acid sequence, 579 residues long: YTH domain-containing family protein 2 (579 aa).

Residues 1 to 45 are disordered; that stretch reads MSASSLLEQRPKGQGNKVQNGSVHQKDGLNDDDFEPYLSPQARPN. An N-acetylserine modification is found at serine 2. Phosphoserine is present on residues serine 2, serine 4, serine 5, serine 22, serine 39, and serine 196. Positions 2-384 are localization to mRNA processing bodies (P-bodies); it reads SASSLLEQRP…QAGSGSTPSE (383 aa). A disordered region spans residues 247–387; that stretch reads AKQQPKLKTK…SGSTPSEPHP (141 aa). A compositionally biased stretch (polar residues) spans 291–316; sequence ALVQNIGQPTQGSPQHVGQQANNSPP. The segment covering 337–349 has biased composition (low complexity); the sequence is AQLSVQQQAAQPT. Serine 359 bears the Phosphoserine mark. Positions 359–371 are enriched in gly residues; sequence SGFGHNGVDGNGV. A compositionally biased stretch (polar residues) spans 372–383; that stretch reads GQSQAGSGSTPS. The segment at 385–579 is interaction with m6A-containing mRNAs; it reads PHPVLEKLRS…VKKERQGRGK (195 aa). Serine 394 is subject to Phosphoserine. One can recognise a YTH domain in the interval 410-544; the sequence is GRVFIIKSYS…EKAKQVLKII (135 aa). RNA-binding positions include 416-418, aspartate 422, 432-433, asparagine 462, tryptophan 486, and tryptophan 491; these read KSY and WC.

This sequence belongs to the YTHDF family. YTHDF2 subfamily. In terms of assembly, interacts with CNOT1; interaction is direct and promotes recruitment of the CCR4-NOT complex. Interacts with YTHDF3. Interacts with RIDA/HRSP12; interaction leads to recruitment of the ribonuclease P/MRP complex. Ubiquitinated by the SCF(SKP2) complex, leading to its degradation.

Its subcellular location is the cytoplasm. It localises to the cytosol. The protein localises to the P-body. The protein resides in the stress granule. It is found in the nucleus. Its function is as follows. Specifically recognizes and binds N6-methyladenosine (m6A)-containing RNAs, and regulates their stability. M6A is a modification present at internal sites of mRNAs and some non-coding RNAs and plays a role in mRNA stability and processing. Acts as a regulator of mRNA stability by promoting degradation of m6A-containing mRNAs via interaction with the CCR4-NOT and ribonuclease P/MRP complexes, depending on the context. The YTHDF paralogs (YTHDF1, YTHDF2 and YTHDF3) share m6A-containing mRNAs targets and act redundantly to mediate mRNA degradation and cellular differentiation. M6A-containing mRNAs containing a binding site for RIDA/HRSP12 (5'-GGUUC-3') are preferentially degraded by endoribonucleolytic cleavage: cooperative binding of RIDA/HRSP12 and YTHDF2 to transcripts leads to recruitment of the ribonuclease P/MRP complex. Other m6A-containing mRNAs undergo deadenylation via direct interaction between YTHDF2 and CNOT1, leading to recruitment of the CCR4-NOT and subsequent deadenylation of m6A-containing mRNAs. Required maternally to regulate oocyte maturation: probably acts by binding to m6A-containing mRNAs, thereby regulating maternal transcript dosage during oocyte maturation, which is essential for the competence of oocytes to sustain early zygotic development. Also required during spermatogenesis: regulates spermagonial adhesion by promoting degradation of m6A-containing transcripts coding for matrix metallopeptidases. Also involved in hematopoietic stem cells specification by binding to m6A-containing mRNAs, leading to promote their degradation. Also acts as a regulator of neural development by promoting m6A-dependent degradation of neural development-related mRNA targets. Inhibits neural specification of induced pluripotent stem cells by binding to methylated neural-specific mRNAs and promoting their degradation, thereby restraining neural differentiation. Regulates circadian regulation of hepatic lipid metabolism: acts by promoting m6A-dependent degradation of PPARA transcripts. Regulates the innate immune response to infection by inhibiting the type I interferon response: acts by binding to m6A-containing IFNB transcripts and promoting their degradation. May also act as a promoter of cap-independent mRNA translation following heat shock stress: upon stress, relocalizes to the nucleus and specifically binds mRNAs with some m6A methylation mark at their 5'-UTR, protecting demethylation of mRNAs by FTO, thereby promoting cap-independent mRNA translation. Regulates mitotic entry by promoting the phase-specific m6A-dependent degradation of WEE1 transcripts. Promotes formation of phase-separated membraneless compartments, such as P-bodies or stress granules, by undergoing liquid-liquid phase separation upon binding to mRNAs containing multiple m6A-modified residues: polymethylated mRNAs act as a multivalent scaffold for the binding of YTHDF proteins, juxtaposing their disordered regions and thereby leading to phase separation. The resulting mRNA-YTHDF complexes then partition into different endogenous phase-separated membraneless compartments, such as P-bodies, stress granules or neuronal RNA granules. May also recognize and bind RNAs modified by C5-methylcytosine (m5C) and act as a regulator of rRNA processing. This Macaca fascicularis (Crab-eating macaque) protein is YTH domain-containing family protein 2.